Reading from the N-terminus, the 435-residue chain is Apparent malate synthase (435 aa).

The Mg(2+) site is built by glutamate 159 and asparagine 180. Glutamate 159 contributes to the substrate binding site.

This sequence belongs to the HpcH/HpaI aldolase family. The cofactor is Mg(2+). Mn(2+) serves as cofactor. Requires Co(2+) as cofactor. Ca(2+) is required as a cofactor.

It catalyses the reaction (S)-malyl-CoA = glyoxylate + acetyl-CoA. It carries out the reaction (S)-malyl-CoA + H2O = (S)-malate + CoA + H(+). Its function is as follows. Involved in the methylaspartate cycle. Catalyzes the biosynthesis of malate in two steps. In the first reaction acetyl-CoA is condensed reversibly with glyoxylate to form (S)-malyl-CoA. In the second reaction (S)-malyl-CoA is hydrolyzed to malate and CoA. It can also catalyze the condensation of propionyl-CoA with glyoxylate and of acetyl-CoA with pyruvate, however the CoA-ester hydrolysis reaction is highly specific for (S)-malyl-CoA. The protein is Apparent malate synthase (aceB) of Haloarcula marismortui (strain ATCC 43049 / DSM 3752 / JCM 8966 / VKM B-1809) (Halobacterium marismortui).